Consider the following 85-residue polypeptide: Large ribosomal subunit protein bL27 (85 aa).

The tract at residues 1–21 is disordered; it reads MAHKKGVGSTRNGRDSESKRL.

The protein belongs to the bacterial ribosomal protein bL27 family.

This is Large ribosomal subunit protein bL27 from Geobacter sulfurreducens (strain ATCC 51573 / DSM 12127 / PCA).